Here is a 399-residue protein sequence, read N- to C-terminus: Proteinase-activated receptor 2 (399 aa).

The N-terminal stretch at 1–25 (MRSLSLAWLLGGITLLAASVSCSRT) is a signal peptide. Positions 26-38 (ENLAPGRNNSKGR) are cleaved as a propeptide — removed for receptor activation. Asn-33 carries N-linked (GlcNAc...) asparagine glycosylation. The Extracellular segment spans residues 39 to 73 (SLIGRLETQPPITGKGVPVEPGFSIDEFSASILTG). Residues 74–103 (KLTTVFLPVVYIIVFVIGLPSNGMALWIFL) form a helical membrane-spanning segment. Topologically, residues 104–110 (FRTKKKH) are cytoplasmic. Residues 111–139 (PAVIYMANLALADLLSVIWFPLKISYHLH) form a helical membrane-spanning segment. Residues 140–151 (GNNWVYGEALCK) are Extracellular-facing. A disulfide bridge connects residues Cys-150 and Cys-228. A helical membrane pass occupies residues 152–179 (VLIGFFYGNMYCSILFMTCLSVQRYWVI). Residues 180–185 (VNPMGH) are Cytoplasmic-facing. The helical transmembrane segment at 186-213 (PRKKANIAVGVSLAIWLLIFLVTIPLYV) threads the bilayer. Topologically, residues 214-237 (MKQTIYIPALNITTCHDVLPEEVL) are extracellular. Residue Asn-224 is glycosylated (N-linked (GlcNAc...) asparagine). Residues 238–271 (VGDMFNYFLSLAIGVFLFPALLTASAYVLMIKTL) form a helical membrane-spanning segment. The Cytoplasmic portion of the chain corresponds to 272-279 (RSSAMDEH). A helical transmembrane segment spans residues 280-319 (SEKKRQRAIRLIITVLAMYFICFAPSNLLLVVHYFLIKTQ). Residues 320–325 (RQSHVY) lie on the Extracellular side of the membrane. A helical membrane pass occupies residues 326–349 (ALYLVALCLSTLNSCIDPFVYYFV). Over 350 to 399 (SKDFRDHARNALLCRSVRTVNRMQISLSSNKFSRKSGSYSSSSTSVKTSY) the chain is Cytoplasmic. Cys-363 is lipidated: S-palmitoyl cysteine.

This sequence belongs to the G-protein coupled receptor 1 family. Interacts with TLR4, COPS5 and TMED2. Interacts with GNAQ, GNA11, GNA12, GNA13 and GNA14. In terms of processing, a proteolytic cleavage generates a new N-terminus that functions as a tethered ligand. Activating serine proteases include trypsin, mast cell tryptase, coagulation factors VII and Xa, myeloblastin/PRTN3 and membrane-type serine protease 1/ST14. Proposed subsequent cleavage by serine proteases is leading to receptor deactivation and include neutrophil elastase and cathepsin G. At least in part, implicated proteases are also shown to activate the receptor; the glycosylation status of the receptor is thought to contribute to the difference. Post-translationally, N-glycosylated and sialylated. Multiple phosphorylated on serine and threonine residues in the cytoplasmic region upon receptor activation; required for receptor desensitization and recruitment of beta-arrestin. In terms of processing, monoubiquitinated by Cbl at the plasma membrane and in early endosomes; not required for receptor endocytosis but for translocation to late endosomes or lysosomes. Deubiquitination involves Stambp and Usp8; required for lysosomal trafficking and receptor degradation.

Its subcellular location is the cell membrane. In terms of biological role, receptor for trypsin and trypsin-like enzymes coupled to G proteins. Its function is mediated through the activation of several signaling pathways including phospholipase C (PLC), intracellular calcium, mitogen-activated protein kinase (MAPK), I-kappaB kinase/NF-kappaB and Rho. Can also be transactivated by cleaved F2r/Par1. Involved in modulation of inflammatory responses and regulation of innate and adaptive immunity, and acts as a sensor for proteolytic enzymes generated during infection. Generally is promoting inflammation. Can signal synergistically with Tlr4 and probably Tlr2 in inflammatory responses and modulates Tlr3 signaling. Has a protective role in establishing the endothelial barrier; the activity involves coagulation factor X. Regulates endothelial cell barrier integrity during neutrophil extravasation, probably following proteolytic cleavage by PRTN3. Proposed to have a bronchoprotective role in airway epithelium, but also shown to compromise the airway epithelial barrier by interrupting E-cadherin adhesion. Involved in the regulation of vascular tone; activation results in hypotension presumably mediated by vasodilation. Associates with a subset of G proteins alpha subunits such as GNAQ, GNA11, GNA14, GNA12 and GNA13, but probably not with G(o)-alpha, G(i) subunit alpha-1 and G(i) subunit alpha-2. Believed to be a class B receptor which internalizes as a complex with arrestin and traffic with it to endosomal vesicles, presumably as desensitized receptor, for extended periods of time. Mediates inhibition of TNF-alpha stimulated JNK phosphorylation via coupling to GNAQ and GNA11; the function involves dissociation of Ripk1 and Tradd from Tnfr1. Mediates phosphorylation of nuclear factor NF-kappa-B RELA subunit at 'Ser-536'; the function involves Ikbkb and is predominantly independent of G proteins. Involved in cellular migration. Involved in cytoskeletal rearrangement and chemotaxis through beta-arrestin-promoted scaffolds; the function is independent of GNAQ and GNA11 and involves promotion of cofilin dephosphorylation and actin filament severing. Induces redistribution of Cops5 from the plasma membrane to the cytosol and activation of the JNK cascade is mediated by Cops5. Involved in the recruitment of leukocytes to the sites of inflammation and is the major PAR receptor capable of modulating eosinophil function such as pro-inflammatory cytokine secretion, superoxide production and degranulation. During inflammation promotes dendritic cell maturation, trafficking to the lymph nodes and subsequent T-cell activation. Involved in antimicrobial response of innate immune cells; activation enhances phagocytosis of Gram-positive and killing of Gram-negative bacteria. Acts synergistically with interferon-gamma in enhancing antiviral responses. Mediates activation of pro-inflammatory and pro-fibrotic responses in fibroblasts, triggered by coagulation factor Xa (F10). Probably mediates activation of barrier protective signaling responses in endothelial cells, triggered by coagulation factor Xa (F10). This Mus musculus (Mouse) protein is Proteinase-activated receptor 2 (F2rl1).